We begin with the raw amino-acid sequence, 343 residues long: UDP-N-acetylglucosamine--N-acetylmuramyl-(pentapeptide) pyrophosphoryl-undecaprenol N-acetylglucosamine transferase (343 aa).

Residues 10-12, Asn-113, Ser-174, and Gln-275 contribute to the UDP-N-acetyl-alpha-D-glucosamine site; that span reads TGG.

The protein belongs to the glycosyltransferase 28 family. MurG subfamily.

It is found in the cell membrane. The catalysed reaction is di-trans,octa-cis-undecaprenyl diphospho-N-acetyl-alpha-D-muramoyl-L-alanyl-D-glutamyl-meso-2,6-diaminopimeloyl-D-alanyl-D-alanine + UDP-N-acetyl-alpha-D-glucosamine = di-trans,octa-cis-undecaprenyl diphospho-[N-acetyl-alpha-D-glucosaminyl-(1-&gt;4)]-N-acetyl-alpha-D-muramoyl-L-alanyl-D-glutamyl-meso-2,6-diaminopimeloyl-D-alanyl-D-alanine + UDP + H(+). It functions in the pathway cell wall biogenesis; peptidoglycan biosynthesis. Functionally, cell wall formation. Catalyzes the transfer of a GlcNAc subunit on undecaprenyl-pyrophosphoryl-MurNAc-pentapeptide (lipid intermediate I) to form undecaprenyl-pyrophosphoryl-MurNAc-(pentapeptide)GlcNAc (lipid intermediate II). The polypeptide is UDP-N-acetylglucosamine--N-acetylmuramyl-(pentapeptide) pyrophosphoryl-undecaprenol N-acetylglucosamine transferase (Wolbachia sp. subsp. Drosophila simulans (strain wRi)).